A 139-amino-acid polypeptide reads, in one-letter code: GPI-anchored protein 53 (139 aa).

The N-terminal stretch at 1–17 (MKFQLLTLVSIATTTLA) is a signal peptide. 2 stretches are compositionally biased toward low complexity: residues 57 to 69 (TITS…TTTT) and 77 to 101 (TSTT…SSSS). Residues 57 to 115 (TITSSSSTTTTTTAKKDKKTTSTTSASSTTTTSTKSNSTSPSSSSSKKHKSETASITKT) are disordered. N93 carries an N-linked (GlcNAc...) asparagine glycan. G116 is lipidated: GPI-anchor amidated glycine. The propeptide at 117–139 (GADSVAAAAAVGGPILAALALLL) is removed in mature form.

Its subcellular location is the cell membrane. This chain is GPI-anchored protein 53 (PGA53), found in Candida albicans (strain SC5314 / ATCC MYA-2876) (Yeast).